Here is a 149-residue protein sequence, read N- to C-terminus: Deoxyuridine 5'-triphosphate nucleotidohydrolase (149 aa).

Substrate is bound by residues 68–70 (RSG), Asn81, 85–87 (TVD), and Lys95.

This sequence belongs to the dUTPase family. Mg(2+) serves as cofactor.

It catalyses the reaction dUTP + H2O = dUMP + diphosphate + H(+). It functions in the pathway pyrimidine metabolism; dUMP biosynthesis; dUMP from dCTP (dUTP route): step 2/2. Its function is as follows. This enzyme is involved in nucleotide metabolism: it produces dUMP, the immediate precursor of thymidine nucleotides and it decreases the intracellular concentration of dUTP so that uracil cannot be incorporated into DNA. This Wolinella succinogenes (strain ATCC 29543 / DSM 1740 / CCUG 13145 / JCM 31913 / LMG 7466 / NCTC 11488 / FDC 602W) (Vibrio succinogenes) protein is Deoxyuridine 5'-triphosphate nucleotidohydrolase.